Here is a 379-residue protein sequence, read N- to C-terminus: Alanine racemase (379 aa).

The Proton acceptor; specific for D-alanine role is filled by K40. K40 is subject to N6-(pyridoxal phosphate)lysine. R138 is a substrate binding site. Y267 acts as the Proton acceptor; specific for L-alanine in catalysis. M315 lines the substrate pocket.

Belongs to the alanine racemase family. Requires pyridoxal 5'-phosphate as cofactor.

The catalysed reaction is L-alanine = D-alanine. It participates in amino-acid biosynthesis; D-alanine biosynthesis; D-alanine from L-alanine: step 1/1. Catalyzes the interconversion of L-alanine and D-alanine. May also act on other amino acids. The chain is Alanine racemase (alr) from Halothermothrix orenii (strain H 168 / OCM 544 / DSM 9562).